The following is a 155-amino-acid chain: Secreted RxLR effector protein RXLR-C301 (155 aa).

Residues 1 to 24 (MRLYALSVSLLAAITLLACVIASA) form the signal peptide. Residues 34–64 (RRLSQDVSETEITELSESKKPTAQDIDNEER) carry the RxLR-dEER motif.

This sequence belongs to the RxLR effector family.

The protein resides in the secreted. The protein localises to the host cell membrane. Functionally, secreted effector that does not suppress pattern-triggered immunity (PTI) in plant host. The sequence is that of Secreted RxLR effector protein RXLR-C301 from Plasmopara halstedii (Downy mildew of sunflower).